The following is a 90-amino-acid chain: DNA-directed RNA polymerase subunit Rpo5 (90 aa).

This sequence belongs to the archaeal Rpo5/eukaryotic RPB5 RNA polymerase subunit family. As to quaternary structure, part of the RNA polymerase complex.

Its subcellular location is the cytoplasm. It carries out the reaction RNA(n) + a ribonucleoside 5'-triphosphate = RNA(n+1) + diphosphate. DNA-dependent RNA polymerase (RNAP) catalyzes the transcription of DNA into RNA using the four ribonucleoside triphosphates as substrates. This chain is DNA-directed RNA polymerase subunit Rpo5, found in Aeropyrum pernix (strain ATCC 700893 / DSM 11879 / JCM 9820 / NBRC 100138 / K1).